Here is a 277-residue protein sequence, read N- to C-terminus: NADPH-dependent 7-cyano-7-deazaguanine reductase (277 aa).

83-85 contacts substrate; it reads VES. 85-86 lines the NADPH pocket; that stretch reads SK. The Thioimide intermediate role is filled by cysteine 184. Aspartate 191 (proton donor) is an active-site residue. 223–224 contacts substrate; that stretch reads HE. An NADPH-binding site is contributed by 252 to 253; that stretch reads RG.

It belongs to the GTP cyclohydrolase I family. QueF type 2 subfamily. Homodimer.

Its subcellular location is the cytoplasm. The enzyme catalyses 7-aminomethyl-7-carbaguanine + 2 NADP(+) = 7-cyano-7-deazaguanine + 2 NADPH + 3 H(+). It functions in the pathway tRNA modification; tRNA-queuosine biosynthesis. Catalyzes the NADPH-dependent reduction of 7-cyano-7-deazaguanine (preQ0) to 7-aminomethyl-7-deazaguanine (preQ1). The sequence is that of NADPH-dependent 7-cyano-7-deazaguanine reductase from Cupriavidus taiwanensis (strain DSM 17343 / BCRC 17206 / CCUG 44338 / CIP 107171 / LMG 19424 / R1) (Ralstonia taiwanensis (strain LMG 19424)).